We begin with the raw amino-acid sequence, 335 residues long: Aspartate carbamoyltransferase catalytic subunit (335 aa).

2 residues coordinate carbamoyl phosphate: Arg81 and Thr82. Lys109 contacts L-aspartate. Carbamoyl phosphate contacts are provided by Arg131, His159, and Gln162. Residues Arg192 and Arg246 each coordinate L-aspartate. Positions 287 and 288 each coordinate carbamoyl phosphate.

The protein belongs to the aspartate/ornithine carbamoyltransferase superfamily. ATCase family. As to quaternary structure, heterododecamer (2C3:3R2) of six catalytic PyrB chains organized as two trimers (C3), and six regulatory PyrI chains organized as three dimers (R2).

The catalysed reaction is carbamoyl phosphate + L-aspartate = N-carbamoyl-L-aspartate + phosphate + H(+). It functions in the pathway pyrimidine metabolism; UMP biosynthesis via de novo pathway; (S)-dihydroorotate from bicarbonate: step 2/3. Catalyzes the condensation of carbamoyl phosphate and aspartate to form carbamoyl aspartate and inorganic phosphate, the committed step in the de novo pyrimidine nucleotide biosynthesis pathway. This is Aspartate carbamoyltransferase catalytic subunit from Caulobacter sp. (strain K31).